The chain runs to 30 residues: Photosystem I reaction center subunit XII (30 aa).

Residues Ile7–Lys26 form a helical membrane-spanning segment.

Belongs to the PsaM family.

The protein localises to the plastid. It localises to the chloroplast thylakoid membrane. In Porphyra purpurea (Red seaweed), this protein is Photosystem I reaction center subunit XII.